The following is a 361-amino-acid chain: Protein TIFY 8 (361 aa).

4 disordered regions span residues 53–78 (NKAAKAAMTPSTASASSAGGLGGLSS), 113–134 (RFSGNKRSNSDSHFTTQEHPET), 190–232 (QTAA…RKDL), and 268–361 (SGGS…KEAT). The segment covering 56 to 78 (AKAAMTPSTASASSAGGLGGLSS) has biased composition (low complexity). Composition is skewed to polar residues over residues 113 to 127 (RFSGNKRSNSDSHFT) and 208 to 232 (SSFTMPNSSKLESFAPSNTGNRKDL). The Tify domain occupies 232–267 (LASSTKQMTIFYGGQAHVFDDVHPNKADVIMALAGS). The span at 333 to 361 (GREHQGSIISRGRDIRDPVHRSDPEKEAT) shows a compositional bias: basic and acidic residues.

This sequence belongs to the TIFY/JAZ family. As to quaternary structure, interacts with AFPH2/NINJA. Ubiquitinated. Targeted for degradation by the SCF(COI1) E3 ubiquitin ligase-proteasome pathway during jasmonate signaling.

Its subcellular location is the nucleus. Functionally, repressor of jasmonate responses. The protein is Protein TIFY 8 of Arabidopsis thaliana (Mouse-ear cress).